A 956-amino-acid chain; its full sequence is MAM domain-containing glycosylphosphatidylinositol anchor protein 2 (956 aa).

The N-terminal stretch at 1–25 is a signal peptide; sequence MDLLYGLVWLLTVLLEGISGQGVYA. Ig-like domains are found at residues 27 to 127 and 134 to 232; these read PTVR…IRVD and PVVT…KMVS. 2 cysteine pairs are disulfide-bonded: Cys62-Cys110 and Cys159-Cys216. N-linked (GlcNAc...) asparagine glycosylation is found at Asn92, Asn213, and Asn237. 4 consecutive Ig-like domains span residues 242-328, 340-436, 442-533, and 540-627; these read PSIK…NIIV, PDPY…VNIS, PNLT…ALVQ, and PAVE…FLVT. 2 disulfides stabilise this stretch: Cys264/Cys310 and Cys359/Cys417. 5 N-linked (GlcNAc...) asparagine glycosylation sites follow: Asn434, Asn443, Asn504, Asn610, and Asn703. 2 disulfide bridges follow: Cys465-Cys515 and Cys561-Cys611. The region spanning 638–739 is the Fibronectin type-III domain; it reads DTYNPVWQNR…IRVIKYSAPV (102 aa). Residues 746-921 enclose the MAM domain; the sequence is FHCGFEDGNI…VSIAEGECAK (176 aa). A lipid anchor (GPI-anchor amidated aspartate) is attached at Asp931. The propeptide at 932–956 is removed in mature form; it reads GAVGILVHIWLFPIIVLISILSPRR.

In terms of assembly, interacts (through the Ig-like domains) with NLGN2. Detected in Leydig cells, syncytiotrophoblast, duodenal villi epithelial cells and neutrophils from kidney and cutaneous squamous cell carcinoma (at protein level).

It is found in the cell membrane. In terms of biological role, may be involved in cell-cell interactions. The chain is MAM domain-containing glycosylphosphatidylinositol anchor protein 2 (MDGA2) from Homo sapiens (Human).